The primary structure comprises 702 residues: Kinesin-like protein KIF3A (702 aa).

The Kinesin motor domain maps to 14 to 345; that stretch reads NVKVVVRCRP…LRYANRAKNI (332 aa). Position 100-107 (100-107) interacts with ATP; it reads GQTGTGKT. Positions 355–593 form a coiled coil; that stretch reads PKDALLRQFQ…LSRELRLQML (239 aa). Disordered stretches follow at residues 372 to 424 and 667 to 702; these read KKLE…KMIE and LMKL…SLLQ. Residues 376–400 are compositionally biased toward acidic residues; the sequence is EGEEISGSDISGSEEDDDEEGEIGE. Positions 410–424 are enriched in basic and acidic residues; the sequence is DQAGKKKVSPDKMIE. Residues 600–702 form a globular region; it reads PRDYQEMIEN…PETVIDSLLQ (103 aa). Basic residues predominate over residues 675–690; the sequence is TSKGKARPKTGRRKRS. At Ser-690 the chain carries Phosphoserine.

The protein belongs to the TRAFAC class myosin-kinesin ATPase superfamily. Kinesin family. Kinesin II subfamily. Heterodimer of KIF3A and KIF3B. Interacts with CIMAP3. Interacts with CLN3. Interacts with DCTN1. Interacts with FLCN. Interacts with AP3B1.

It is found in the cytoplasm. It localises to the cytoskeleton. The protein resides in the cell projection. The protein localises to the cilium. Its subcellular location is the microtubule organizing center. It is found in the centrosome. It localises to the centriole. In terms of biological role, microtubule-based anterograde translocator for membranous organelles. Plus end-directed microtubule sliding activity in vitro. Plays a role in primary cilia formation. Plays a role in centriole cohesion and subdistal appendage organization and function. Regulates the formation of the subdistal appendage via recruitment of DCTN1 to the centriole. Also required for ciliary basal feet formation and microtubule anchoring to mother centriole. The sequence is that of Kinesin-like protein KIF3A (KIF3A) from Pongo abelii (Sumatran orangutan).